A 155-amino-acid chain; its full sequence is Small ribosomal subunit protein uS7 (155 aa).

The protein belongs to the universal ribosomal protein uS7 family. As to quaternary structure, part of the 30S ribosomal subunit. Contacts proteins S9 and S11.

One of the primary rRNA binding proteins, it binds directly to 16S rRNA where it nucleates assembly of the head domain of the 30S subunit. Is located at the subunit interface close to the decoding center, probably blocks exit of the E-site tRNA. This is Small ribosomal subunit protein uS7 from Thioalkalivibrio sulfidiphilus (strain HL-EbGR7).